A 439-amino-acid polypeptide reads, in one-letter code: MDVDQLILFVFVCCLSSRFADAYDPVDPNGNIIINWDFQSIENVYTVMVSVHNHQLYRHIEQPGWRLSWRWAGNEIIWGMTGAEATEQGDCHRIRGATRPHCCEKQPVIVDLPPGTPYNNQVSSCCRGGVLSSLTQNNRTSTAAFQMVVGGFRRATYHDGDRGPALPSRFGVGVPGYSCSNATKVNATSSERFLLPRARAPCAVTWQVTCTYSQFMEAASPTCCVSLSSFYNSTIVPCPRCSCGCPRSPTAPQCISEGEKPELPAGDGEAVAPVFRCTDHMCPVRVHWHVKISYREYWRVKVTITNYNQVKNYSDWNLVVQHPNLRSLTQLFSFNYQPLIEYGTLNDTGMFWGIQYYNEMMLQDGNVQTEMILKKDKSDFTFSGGWAFPRRVYFDGHECVMPPPDQYPLLPNGGPDSRVSAAQLIASSCLLLPFIFLIM.

Residues 1–22 form the signal peptide; the sequence is MDVDQLILFVFVCCLSSRFADA. N-linked (GlcNAc...) asparagine glycans are attached at residues N138, N181, N186, N232, N312, and N346. The GPI-anchor amidated asparagine moiety is linked to residue N412. The propeptide at 413–439 is removed in mature form; that stretch reads GGPDSRVSAAQLIASSCLLLPFIFLIM.

The protein belongs to the COBRA family.

The protein localises to the cell membrane. In terms of biological role, involved in determining the orientation of cell expansion, probably by playing an important role in cellulose deposition. May act by recruiting cellulose synthesizing complexes to discrete positions on the cell surface. The sequence is that of COBRA-like protein 7 (BC1LP1) from Oryza sativa subsp. japonica (Rice).